The following is a 141-amino-acid chain: Hemoglobin subunit alpha-D (141 aa).

Residues 1–141 (MLNAEDKKLI…VSAVLAEKYR (141 aa)) enclose the Globin domain. His58 and His87 together coordinate heme b.

The protein belongs to the globin family. In terms of assembly, heterotetramer of two alpha-D chains and two beta chains. In terms of tissue distribution, red blood cells.

Functionally, involved in oxygen transport from the lung to the various peripheral tissues. The polypeptide is Hemoglobin subunit alpha-D (HBAD) (Phasianus colchicus colchicus (Black-necked pheasant)).